A 229-amino-acid polypeptide reads, in one-letter code: Ribonuclease 3 (229 aa).

The 123-residue stretch at 5-127 (LARLERKLGY…LIGAIYLDAD (123 aa)) folds into the RNase III domain. Position 40 (glutamate 40) interacts with Mg(2+). Aspartate 44 is a catalytic residue. Positions 113 and 116 each coordinate Mg(2+). The active site involves glutamate 116. Residues 154–224 (DPKTRLQEFL…AASALIALGV (71 aa)) form the DRBM domain.

This sequence belongs to the ribonuclease III family. In terms of assembly, homodimer. The cofactor is Mg(2+).

The protein localises to the cytoplasm. It catalyses the reaction Endonucleolytic cleavage to 5'-phosphomonoester.. Functionally, digests double-stranded RNA. Involved in the processing of primary rRNA transcript to yield the immediate precursors to the large and small rRNAs (23S and 16S). Processes some mRNAs, and tRNAs when they are encoded in the rRNA operon. Processes pre-crRNA and tracrRNA of type II CRISPR loci if present in the organism. The polypeptide is Ribonuclease 3 (Pseudomonas putida (strain GB-1)).